The primary structure comprises 159 residues: Large ribosomal subunit protein uL22c (159 aa).

It belongs to the universal ribosomal protein uL22 family. As to quaternary structure, part of the 50S ribosomal subunit.

The protein resides in the plastid. It localises to the chloroplast. Functionally, this protein binds specifically to 23S rRNA. Its function is as follows. The globular domain of the protein is located near the polypeptide exit tunnel on the outside of the subunit, while an extended beta-hairpin is found that lines the wall of the exit tunnel in the center of the 70S ribosome. The sequence is that of Large ribosomal subunit protein uL22c (rpl22) from Ipomoea purpurea (Common morning glory).